Reading from the N-terminus, the 417-residue chain is Lysosome-associated membrane glycoprotein 1 (417 aa).

An N-terminal signal peptide occupies residues 1–28 (MAAPGSARRPLLLLLLLLLLGLMHCASA). Positions 29-194 (AMFMVKNGNG…SRGETRCEQD (166 aa)) are first lumenal domain. Over 29–382 (AMFMVKNGNG…EECLLDENSM (354 aa)) the chain is Lumenal. 2 N-linked (GlcNAc...) asparagine glycosylation sites follow: Asn37 and Asn45. Cysteines 41 and 80 form a disulfide. A glycan (N-linked (GlcNAc...) (polylactosaminoglycan) asparagine) is linked at Asn62. 4 N-linked (GlcNAc...) asparagine glycosylation sites follow: Asn76, Asn84, Asn103, and Asn107. Asn121 and Asn130 each carry an N-linked (GlcNAc...) (polylactosaminoglycan) asparagine glycan. Cys155 and Cys191 form a disulfide bridge. N-linked (GlcNAc...) asparagine glycans are attached at residues Asn165 and Asn181. The tract at residues 184–221 (FSRGETRCEQDRPSPTTAPPAPPSPSPSPVPKSPSVDK) is disordered. Positions 195 to 227 (RPSPTTAPPAPPSPSPSPVPKSPSVDKYNVSGT) are hinge. A glycan (O-linked (GalNAc...) serine; partial) is linked at Ser197. Thr199 and Thr200 each carry an O-linked (GalNAc...) threonine glycan. Over residues 199-215 (TTAPPAPPSPSPSPVPK) the composition is skewed to pro residues. O-linked (GalNAc...) serine glycans are attached at residues Ser207, Ser209, and Ser211. Residues Asn223 and Asn228 are each glycosylated (N-linked (GlcNAc...) (polylactosaminoglycan) asparagine). The tract at residues 228 to 382 (NGTCLLASMG…EECLLDENSM (155 aa)) is second lumenal domain. Cys231 and Cys269 are disulfide-bonded. N-linked (GlcNAc...) asparagine glycans are attached at residues Asn241, Asn249, Asn261, Asn293, and Asn322. A disulfide bond links Cys338 and Cys375. The helical transmembrane segment at 383–410 (LIPIAVGGALAGLVLIVLIAYLVGRKRS) threads the bilayer. Topologically, residues 411–417 (HAGYQTI) are cytoplasmic.

It belongs to the LAMP family. Interacts with ABCB9; this interaction strongly stabilizes ABCB9 and protects ABCB9 against lysosomal degradation. Interacts with FURIN. Interacts with TMEM175; inhibiting the proton channel activity of TMEM175. In terms of assembly, (Microbial infection) Interacts with Lassa virus protein glycoprotein. As to quaternary structure, (Microbial infection) Interacts with mumps virus protein F; this interaction promotes protein F cleavage by FURIN. In terms of processing, O- and N-glycosylated; some of the 18 N-linked glycans are polylactosaminoglycans. Post-translationally, (Microbial infection) The glycosylation of Asn-76 is essential for Lassa virus entry into cells.

It is found in the lysosome membrane. It localises to the endosome membrane. The protein resides in the late endosome membrane. The protein localises to the cell membrane. Its subcellular location is the cytolytic granule membrane. In terms of biological role, lysosomal membrane glycoprotein which plays an important role in lysosome biogenesis, lysosomal pH regulation, autophagy and cholesterol homeostasis. Acts as an important regulator of lysosomal lumen pH regulation by acting as a direct inhibitor of the proton channel TMEM175, facilitating lysosomal acidification for optimal hydrolase activity. Also plays an important role in NK-cells cytotoxicity. Mechanistically, participates in cytotoxic granule movement to the cell surface and perforin trafficking to the lytic granule. In addition, protects NK-cells from degranulation-associated damage induced by their own cytotoxic granule content. Presents carbohydrate ligands to selectins. (Microbial infection) Acts as a receptor for Lassa virus glycoprotein. Also promotes fusion of the virus with host membrane in less acidic endosomes. Functionally, (Microbial infection) Supports the FURIN-mediated cleavage of mumps virus fusion protein F by interacting with both FURIN and the unprocessed form but not the processed form of the viral protein F. In Homo sapiens (Human), this protein is Lysosome-associated membrane glycoprotein 1.